Consider the following 158-residue polypeptide: Non-secretory ribonuclease (158 aa).

The first 27 residues, 1–27 (MVPKLFTSQICLLPLLGLLSAEGSPHA), serve as a signal peptide directing secretion. Histidine 42 (proton acceptor) is an active-site residue. At tyrosine 60 the chain carries 3'-nitrotyrosine. 65 to 69 (KNKNT) contributes to the substrate binding site. N-linked (GlcNAc...) asparagine glycans are attached at residues asparagine 86, asparagine 92, and asparagine 111. Histidine 153 serves as the catalytic Proton donor.

This sequence belongs to the pancreatic ribonuclease family. As to quaternary structure, interacts with and forms a tight 1:1 complex with RNH1. Dimerization of two such complexes may occur.

Its subcellular location is the lysosome. The protein resides in the cytoplasmic granule. The enzyme catalyses an [RNA] containing cytidine + H2O = an [RNA]-3'-cytidine-3'-phosphate + a 5'-hydroxy-ribonucleotide-3'-[RNA].. The catalysed reaction is an [RNA] containing uridine + H2O = an [RNA]-3'-uridine-3'-phosphate + a 5'-hydroxy-ribonucleotide-3'-[RNA].. Its function is as follows. This is a non-secretory ribonuclease. It is a pyrimidine specific nuclease with a slight preference for U. Cytotoxin and helminthotoxin. Possesses a wide variety of biological activities. In Callithrix jacchus (White-tufted-ear marmoset), this protein is Non-secretory ribonuclease (RNASE2).